A 142-amino-acid chain; its full sequence is 3-hydroxyacyl-[acyl-carrier-protein] dehydratase FabZ (142 aa).

His-48 is a catalytic residue.

Belongs to the thioester dehydratase family. FabZ subfamily.

It is found in the cytoplasm. It carries out the reaction a (3R)-hydroxyacyl-[ACP] = a (2E)-enoyl-[ACP] + H2O. Functionally, involved in unsaturated fatty acids biosynthesis. Catalyzes the dehydration of short chain beta-hydroxyacyl-ACPs and long chain saturated and unsaturated beta-hydroxyacyl-ACPs. The sequence is that of 3-hydroxyacyl-[acyl-carrier-protein] dehydratase FabZ from Desulforamulus reducens (strain ATCC BAA-1160 / DSM 100696 / MI-1) (Desulfotomaculum reducens).